The following is a 953-amino-acid chain: Coiled-coil domain-containing protein 14 (953 aa).

Residues 1–21 are compositionally biased toward basic residues; sequence MKRGIRRDPFRKRKLGGRAKK. 2 disordered regions span residues 1–22 and 52–72; these read MKRG…AKKV and SGAR…AKLT. A Phosphoserine modification is found at Ser124. Disordered stretches follow at residues 126 to 189 and 268 to 287; these read SETA…TSDL and PPCP…SQFA. The segment covering 145 to 154 has biased composition (basic residues); it reads YGSKKKRHEK. The segment covering 169–187 has biased composition (basic and acidic residues); the sequence is DNKKQIPNEASARSERDTS. A compositionally biased stretch (polar residues) spans 277–287; sequence EVQTDGNSQFA. Coiled-coil stretches lie at residues 383-413 and 483-618; these read LATN…RDTK and AMQP…AEKE. A phosphoserine mark is found at Ser670, Ser754, and Ser798.

Interacts with CEP63.

The protein resides in the cytoplasm. It localises to the cytoskeleton. It is found in the microtubule organizing center. The protein localises to the centrosome. Its subcellular location is the centriolar satellite. Negatively regulates centriole duplication. Negatively regulates CEP63 and CDK2 centrosomal localization. This is Coiled-coil domain-containing protein 14 (CCDC14) from Homo sapiens (Human).